Reading from the N-terminus, the 179-residue chain is Large ribosomal subunit protein bL27c (179 aa).

The transit peptide at 1-51 directs the protein to the chloroplast; it reads MAVSFSLVGAFKGLSLASSSSFLKGDFGAAFPVAPKFSVSFPLKSPLTIES.

Belongs to the bacterial ribosomal protein bL27 family. As to quaternary structure, part of the 50S ribosomal subunit.

It is found in the plastid. Its subcellular location is the chloroplast. This is Large ribosomal subunit protein bL27c (RPL27) from Nicotiana tabacum (Common tobacco).